Here is a 1088-residue protein sequence, read N- to C-terminus: Probable cellulose synthase A catalytic subunit 9 [UDP-forming] (1088 aa).

Residue methionine 1 is modified to N-acetylmethionine. The Cytoplasmic portion of the chain corresponds to 1–283 (MNTGGRLIAG…RSSRINPYRM (283 aa)). Zn(2+) is bound by residues cysteine 39, cysteine 42, cysteine 58, cysteine 61, cysteine 66, cysteine 69, cysteine 81, and cysteine 84. An RING-type; degenerate zinc finger spans residues 39–85 (CKICRDEIELTDNGEPFIACNECAFPTCRPCYEYERREGNQACPQCG). The chain crosses the membrane as a helical span at residues 284 to 304 (LIFCRLAILGLFFHYRILHPV). Residues 305 to 306 (ND) lie on the Extracellular side of the membrane. A helical membrane pass occupies residues 307-327 (AFGLWLTSVICEIWFAVSWIL). Over 328–871 (DQFPKWYPIE…INSVVYPWTS (544 aa)) the chain is Cytoplasmic. Serine 366, lysine 372, glutamate 373, aspartate 402, and lysine 543 together coordinate UDP-alpha-D-glucose. Aspartate 402 is a catalytic residue. Lysine 544 and aspartate 568 together coordinate Mn(2+). Aspartate 788 is an active-site residue. The chain crosses the membrane as a helical span at residues 872 to 892 (LPLLVYCSLPAICLLTGKFIV). At 893–897 (PEISN) the chain is on the extracellular side. A helical membrane pass occupies residues 898 to 918 (YAGILFLLMFMSIAVTGILEM). Residues 919–933 (QWGKIGIDDWWRNEQ) are Cytoplasmic-facing. Residues 934–954 (FWVIGGVSSHLFALFQGLLKV) traverse the membrane as a helical segment. Residues 955–983 (LAGVSTNFTVTSKAADDGEFSELYIFKWT) lie on the Extracellular side of the membrane. An N-linked (GlcNAc...) asparagine glycan is attached at asparagine 961. Residues 984–1004 (SLLIPPTTLLIINIVGVIVGV) form a helical membrane-spanning segment. At 1005 to 1015 (SDAINNGYDSW) the chain is on the cytoplasmic side. Residues 1016 to 1036 (GPLFGRLFFALWVIVHLYPFL) form a helical membrane-spanning segment. Residues 1037-1045 (KGLLGKQDR) lie on the Extracellular side of the membrane. Residues 1046–1066 (VPTIILVWSILLASILTLLWV) form a helical membrane-spanning segment. Topologically, residues 1067–1088 (RVNPFVSKDGPVLEICGLDCLK) are cytoplasmic.

It belongs to the glycosyltransferase 2 family. Plant cellulose synthase subfamily. Mn(2+) serves as cofactor. Zn(2+) is required as a cofactor. Expressed in young plants, stems and flowers.

The protein resides in the cell membrane. It carries out the reaction [(1-&gt;4)-beta-D-glucosyl](n) + UDP-alpha-D-glucose = [(1-&gt;4)-beta-D-glucosyl](n+1) + UDP + H(+). The protein operates within glycan metabolism; plant cellulose biosynthesis. Probable catalytic subunit of cellulose synthase terminal complexes ('rosettes'), required for beta-1,4-glucan microfibril crystallization, a major mechanism of the cell wall formation. The protein is Probable cellulose synthase A catalytic subunit 9 [UDP-forming] of Arabidopsis thaliana (Mouse-ear cress).